The following is a 325-amino-acid chain: Melanocortin receptor 5 (325 aa).

The Extracellular portion of the chain corresponds to 1-37; that stretch reads MNSSSHLTLLDLTLNASEDNILGQNVNNKSSACEDMG. N-linked (GlcNAc...) asparagine glycosylation is found at Asn-2, Asn-15, and Asn-28. Residues 38 to 61 traverse the membrane as a helical segment; that stretch reads IAVEVFLTLGLVSLLENILVIGAI. The Cytoplasmic portion of the chain corresponds to 62-73; that stretch reads VKNKNLHSPMYF. A helical transmembrane segment spans residues 74–97; it reads FVGSLAVADMLVSMSNAWETITIY. At 98–114 the chain is on the extracellular side; it reads LINNKHVVIADTFVRHI. Residues 115-138 form a helical membrane-spanning segment; it reads DNVFDSMICISVVASMCSLLAIAV. The Cytoplasmic segment spans residues 139-155; it reads DRYITIFYALRYHHIMT. A helical transmembrane segment spans residues 156-179; that stretch reads ARRSGVIIACIWTFCISCGIVFII. Over 180-186 the chain is Extracellular; sequence YYESKYV. A helical transmembrane segment spans residues 187–211; that stretch reads IVCLISMFFTMLFFMVSLYIHMFLL. The Cytoplasmic segment spans residues 212–239; that stretch reads ARNHVKRIAASPRYNSVRQRASMKGAIT. Residues 240–265 traverse the membrane as a helical segment; the sequence is LTMLLGIFIVCWSPFFLHLILMISCP. The Extracellular segment spans residues 266–273; sequence QNVYCACF. The helical transmembrane segment at 274 to 297 threads the bilayer; it reads MSYFNMYLILIMCNSVIDPLIYAL. The Cytoplasmic portion of the chain corresponds to 298 to 325; it reads RSQEMRRTFKEIICCHGFRRTCTLLGRY. 2 S-palmitoyl cysteine lipidation sites follow: Cys-311 and Cys-312.

Belongs to the G-protein coupled receptor 1 family. Very low expression levels is detected in brain, while high levels are found in adrenals, stomach, lung and spleen.

Its subcellular location is the cell membrane. Functionally, receptor for MSH (alpha, beta and gamma) and ACTH. The activity of this receptor is mediated by G proteins which activate adenylate cyclase. This receptor is a possible mediator of the immunomodulation properties of melanocortins. The chain is Melanocortin receptor 5 (Mc5r) from Rattus norvegicus (Rat).